Reading from the N-terminus, the 910-residue chain is Translation factor GUF1 homolog, mitochondrial (910 aa).

The segment at 126-188 is disordered; sequence RRGNGLPFER…DGGGAPEHPQ (63 aa). The tr-type G domain occupies 189-366; it reads QNVRNFCILA…RIVSDIPCPA (178 aa). GTP contacts are provided by residues 198–205, 259–263, and 313–316; these read AHIDSGKS, DTPGH, and NKID. A disordered region spans residues 639–683; the sequence is GSGDGRADGSADGSADGSADGSGDSSAHGSSDRRGAGCARGSDDI. Residues 646 to 667 show a composition bias toward low complexity; sequence DGSADGSADGSADGSGDSSAHG.

It belongs to the TRAFAC class translation factor GTPase superfamily. Classic translation factor GTPase family. LepA subfamily.

The protein localises to the mitochondrion inner membrane. The catalysed reaction is GTP + H2O = GDP + phosphate + H(+). Promotes mitochondrial protein synthesis. May act as a fidelity factor of the translation reaction, by catalyzing a one-codon backward translocation of tRNAs on improperly translocated ribosomes. Binds to mitochondrial ribosomes in a GTP-dependent manner. The sequence is that of Translation factor GUF1 homolog, mitochondrial from Plasmodium vivax (strain Salvador I).